The chain runs to 136 residues: Nucleoside diphosphate kinase (136 aa).

The ATP site is built by Lys10, Phe58, Arg86, Thr92, Arg104, and Asn114. His117 functions as the Pros-phosphohistidine intermediate in the catalytic mechanism.

The protein belongs to the NDK family. As to quaternary structure, homotetramer. It depends on Mg(2+) as a cofactor.

It localises to the cytoplasm. It carries out the reaction a 2'-deoxyribonucleoside 5'-diphosphate + ATP = a 2'-deoxyribonucleoside 5'-triphosphate + ADP. It catalyses the reaction a ribonucleoside 5'-diphosphate + ATP = a ribonucleoside 5'-triphosphate + ADP. In terms of biological role, major role in the synthesis of nucleoside triphosphates other than ATP. The ATP gamma phosphate is transferred to the NDP beta phosphate via a ping-pong mechanism, using a phosphorylated active-site intermediate. This is Nucleoside diphosphate kinase from Mycolicibacterium paratuberculosis (strain ATCC BAA-968 / K-10) (Mycobacterium paratuberculosis).